A 127-amino-acid chain; its full sequence is Small ribosomal subunit protein eS8 (127 aa).

The disordered stretch occupies residues 1 to 31; the sequence is MTIFQGKSGKKATGGSLKQSRKKRRFELGRE.

It belongs to the eukaryotic ribosomal protein eS8 family. Part of the 30S ribosomal subunit.

The sequence is that of Small ribosomal subunit protein eS8 (rps8e) from Thermoplasma acidophilum (strain ATCC 25905 / DSM 1728 / JCM 9062 / NBRC 15155 / AMRC-C165).